The following is a 570-amino-acid chain: 4-coumarate--CoA ligase 4 (570 aa).

Residues Ser218, Ser219, Gly220, Thr221, Thr222, and Lys226 each coordinate ATP. Residue Tyr268 participates in (E)-4-coumaroyl-AMP binding. A CoA-binding site is contributed by Arg289. An SBD1 region spans residues 291–360 (ELNLVMELIQ…LKFPNAIFGQ (70 aa)). Positions 338, 360, 361, and 365 each coordinate (E)-4-coumaroyl-AMP. The ATP site is built by Gln360, Gly361, Thr365, Asp448, and Arg463. The segment at 361 to 427 (GYGMTESGTV…VRGHQLMKGY (67 aa)) is SBD2. (E)-4-coumaroyl-AMP-binding residues include Lys465 and Lys469. Positions 471 and 472 each coordinate CoA. Lys554 lines the ATP pocket.

The protein belongs to the ATP-dependent AMP-binding enzyme family. Requires Mg(2+) as cofactor.

The catalysed reaction is (E)-sinapate + ATP + CoA = (E)-sinapoyl-CoA + AMP + diphosphate. It catalyses the reaction (E)-4-coumarate + ATP + CoA = (E)-4-coumaroyl-CoA + AMP + diphosphate. It carries out the reaction (E)-caffeate + ATP + CoA = (E)-caffeoyl-CoA + AMP + diphosphate. The enzyme catalyses (E)-ferulate + ATP + CoA = (E)-feruloyl-CoA + AMP + diphosphate. The catalysed reaction is (E)-sinapate + ATP + H(+) = (E)-sinapoyl-AMP + diphosphate. It catalyses the reaction (E)-sinapoyl-AMP + CoA = (E)-sinapoyl-CoA + AMP + H(+). It carries out the reaction (E)-4-coumarate + ATP + H(+) = (E)-4-coumaroyl-AMP + diphosphate. The enzyme catalyses (E)-4-coumaroyl-AMP + CoA = (E)-4-coumaroyl-CoA + AMP + H(+). The catalysed reaction is (E)-caffeate + ATP + H(+) = (E)-caffeoyl-AMP + diphosphate. It catalyses the reaction (E)-caffeoyl-AMP + CoA = (E)-caffeoyl-CoA + AMP + H(+). It carries out the reaction (E)-ferulate + ATP + H(+) = (E)-feruloyl-AMP + diphosphate. The enzyme catalyses (E)-feruloyl-AMP + CoA = (E)-feruloyl-CoA + AMP + H(+). The protein operates within phytoalexin biosynthesis; 3,4',5-trihydroxystilbene biosynthesis; 3,4',5-trihydroxystilbene from trans-4-coumarate: step 1/2. Its function is as follows. Produces CoA thioesters of a variety of hydroxy- and methoxy-substituted cinnamic acids, which are used to synthesize several phenylpropanoid-derived compounds, including anthocyanins, flavonoids, isoflavonoids, coumarins, lignin, suberin and wall-bound phenolics. Follows a two-step reaction mechanism, wherein the carboxylate substrate first undergoes adenylation by ATP, followed by a thioesterification in the presence of CoA to yield the final CoA thioesters. This chain is 4-coumarate--CoA ligase 4, found in Arabidopsis thaliana (Mouse-ear cress).